The chain runs to 353 residues: GDSL esterase/lipase At5g03810 (353 aa).

A signal peptide spans 1–24 (MKMFITMSMCLSVIACFYAGVGTG). Residue Ser37 is the Nucleophile of the active site. Residues Asn100, Asn255, Asn256, Asn260, and Asn320 are each glycosylated (N-linked (GlcNAc...) asparagine). Residues Asp328 and His331 contribute to the active site.

The protein belongs to the 'GDSL' lipolytic enzyme family.

The protein resides in the secreted. This Arabidopsis thaliana (Mouse-ear cress) protein is GDSL esterase/lipase At5g03810.